A 59-amino-acid chain; its full sequence is Potassium channel toxin alpha-KTx 15.5 (59 aa).

A signal peptide spans 1-22 (MKFSSIILLTLLICSMSIFGNC). At Gln23 the chain carries Pyrrolidone carboxylic acid. 3 cysteine pairs are disulfide-bonded: Cys30-Cys50, Cys35-Cys55, and Cys39-Cys57.

This sequence belongs to the short scorpion toxin superfamily. Potassium channel inhibitor family. Alpha-KTx 15 subfamily. As to expression, expressed by the venom gland.

The protein resides in the secreted. Functionally, blocker of A-type voltage-gated potassium channels of cerebellar granular cells. May also inhibit Kv4/KCND when coexpressed with DPP6 or DPP10. The occlusion of the outer entry of the K(+) conducting pore is partially reversible and affects both open and closed channels. It shares the same target in rat brain than BmTX3 (AC Q8I0L5) and AmmTX3 (AC P60208). The chain is Potassium channel toxin alpha-KTx 15.5 from Androctonus australis (Sahara scorpion).